We begin with the raw amino-acid sequence, 224 residues long: UPF0441 protein PC1_0312 (224 aa).

The tract at residues 178-224 (PKTALAPKPATTSTITRGGFGETVAKQNSMQRSSASSSSSSSRSMGG) is disordered. A compositionally biased stretch (low complexity) spans 209–224 (RSSASSSSSSSRSMGG).

Belongs to the UPF0441 family.

The polypeptide is UPF0441 protein PC1_0312 (Pectobacterium carotovorum subsp. carotovorum (strain PC1)).